Consider the following 518-residue polypeptide: Pumilio homolog 14 (518 aa).

Disordered regions lie at residues 26 to 46 (TMAS…QPEN) and 77 to 114 (VGQN…PPMG). Residues 29 to 44 (SSSSQPQPISSPFHQP) are compositionally biased toward low complexity. The PUM-HD domain maps to 178 to 518 (YTNRFGYEGY…GNKVLEKLNI (341 aa)). The stretch at 206–235 (SAFAKDKEMSERLGMSIFQGTKETVDAIYN) is one Pumilio 1; degenerate repeat. 7 Pumilio repeats span residues 236-271 (GLIG…QLVD), 275-313 (QQMF…RIVD), 314-348 (VVRT…LLLE), 349-387 (LIVQ…RLIM), 388-423 (EAIA…ALVR), 424-459 (QLIG…IVID), and 460-494 (LLRE…MLRY).

The protein localises to the cytoplasm. It is found in the nucleus. In terms of biological role, sequence-specific RNA-binding protein that regulates translation and mRNA stability by binding the 3'-UTR of target mRNAs. The polypeptide is Pumilio homolog 14 (APUM14) (Arabidopsis thaliana (Mouse-ear cress)).